We begin with the raw amino-acid sequence, 111 residues long: Putative single-stranded DNA-binding protein ycf41 (111 aa).

Positions Met-1–Lys-98 constitute an SSB domain.

The protein localises to the plastid. It is found in the chloroplast. The chain is Putative single-stranded DNA-binding protein ycf41 (ycf41) from Porphyra purpurea (Red seaweed).